Here is an 856-residue protein sequence, read N- to C-terminus: Protein phosphatase 2C 32 (856 aa).

Phosphoserine is present on residues S152, S189, and S201. The region spanning 269-835 (ESCLESNRNL…DDVSVMVVSL (567 aa)) is the PPM-type phosphatase domain. Residues D307 and G308 each coordinate Mn(2+). Disordered stretches follow at residues 340–373 (PSED…KSVV), 388–407 (GNTD…GPGK), and 446–485 (NPST…QISS). Positions 395-407 (ADGPPGDSAGPGK) are enriched in low complexity. Positions 471–485 (NSGQRHGTKKSQISS) are enriched in polar residues. Mn(2+) contacts are provided by D763 and D826.

The protein belongs to the PP2C family. It depends on Mg(2+) as a cofactor. Mn(2+) serves as cofactor. As to expression, expressed in roots, leaves, stems, inflorescences, flowers and throughout the shoot meristem.

It is found in the nucleus. The catalysed reaction is O-phospho-L-seryl-[protein] + H2O = L-seryl-[protein] + phosphate. It catalyses the reaction O-phospho-L-threonyl-[protein] + H2O = L-threonyl-[protein] + phosphate. With respect to regulation, insensitive to okadaic acid. Functionally, involved in the regulation of pedicel length and of CLAVATA pathways controlling stem cell identity at shoot and flower meristems. This is Protein phosphatase 2C 32 (POL) from Arabidopsis thaliana (Mouse-ear cress).